Reading from the N-terminus, the 228-residue chain is Sec-independent protein translocase protein TatB (228 aa).

The chain crosses the membrane as a helical span at residues 1–21 (MFDFGLGELVFVGIIALIVLG). 2 disordered regions span residues 109–162 (DFGV…AETD) and 197–228 (PHTT…VRKS). Residues 206–228 (AISRKRDFRPKHRAKPKLRVRKS) are compositionally biased toward basic residues.

Belongs to the TatB family. As to quaternary structure, the Tat system comprises two distinct complexes: a TatABC complex, containing multiple copies of TatA, TatB and TatC subunits, and a separate TatA complex, containing only TatA subunits. Substrates initially bind to the TatABC complex, which probably triggers association of the separate TatA complex to form the active translocon.

Its subcellular location is the cell inner membrane. In terms of biological role, part of the twin-arginine translocation (Tat) system that transports large folded proteins containing a characteristic twin-arginine motif in their signal peptide across membranes. Together with TatC, TatB is part of a receptor directly interacting with Tat signal peptides. TatB may form an oligomeric binding site that transiently accommodates folded Tat precursor proteins before their translocation. The sequence is that of Sec-independent protein translocase protein TatB from Neisseria meningitidis serogroup B (strain ATCC BAA-335 / MC58).